A 279-amino-acid polypeptide reads, in one-letter code: Toxin TxP-I (279 aa).

Positions Met1 to Ala14 are cleaved as a signal peptide. Positions Val15–Ile27 are excised as a propeptide.

Contains several disulfide bonds. As to expression, posterior glands which appear to be connected with the stylet through a series of ducts.

Its subcellular location is the secreted. Its function is as follows. Part of a complex mixture of neurotoxins which P.tritici utilizes to capture prey. It has contracting-paralyzing activity in insects. The sequence is that of Toxin TxP-I from Pyemotes tritici (Straw itch mite).